Reading from the N-terminus, the 297-residue chain is Ribosomal RNA small subunit methyltransferase H (297 aa).

S-adenosyl-L-methionine-binding positions include 30–32, D48, F75, D96, and Q103; that span reads GGY.

This sequence belongs to the methyltransferase superfamily. RsmH family.

It localises to the cytoplasm. The catalysed reaction is cytidine(1402) in 16S rRNA + S-adenosyl-L-methionine = N(4)-methylcytidine(1402) in 16S rRNA + S-adenosyl-L-homocysteine + H(+). Functionally, specifically methylates the N4 position of cytidine in position 1402 (C1402) of 16S rRNA. The protein is Ribosomal RNA small subunit methyltransferase H of Ehrlichia canis (strain Jake).